A 147-amino-acid chain; its full sequence is Small ribosomal subunit protein uS5 (147 aa).

One can recognise an S5 DRBM domain in the interval 9–72; that stretch reads FEEVIVDIGR…DDAFKNIVEV (64 aa).

It belongs to the universal ribosomal protein uS5 family. Part of the 30S ribosomal subunit. Contacts proteins S4 and S8.

Functionally, with S4 and S12 plays an important role in translational accuracy. Its function is as follows. Located at the back of the 30S subunit body where it stabilizes the conformation of the head with respect to the body. The chain is Small ribosomal subunit protein uS5 from Campylobacter fetus subsp. fetus (strain 82-40).